Here is a 277-residue protein sequence, read N- to C-terminus: Large ribosomal subunit protein uL2 (277 aa).

2 disordered regions span residues 37-58 (LHSKGGRNVHGRITTRHQGGGH) and 222-277 (GVAM…NRRR). Over residues 268-277 (VRRRKQNRRR) the composition is skewed to basic residues.

It belongs to the universal ribosomal protein uL2 family. As to quaternary structure, part of the 50S ribosomal subunit. Forms a bridge to the 30S subunit in the 70S ribosome.

Its function is as follows. One of the primary rRNA binding proteins. Required for association of the 30S and 50S subunits to form the 70S ribosome, for tRNA binding and peptide bond formation. It has been suggested to have peptidyltransferase activity; this is somewhat controversial. Makes several contacts with the 16S rRNA in the 70S ribosome. This is Large ribosomal subunit protein uL2 from Parafrankia sp. (strain EAN1pec).